The following is a 238-amino-acid chain: Leucyl/phenylalanyl-tRNA--protein transferase (238 aa).

This sequence belongs to the L/F-transferase family.

Its subcellular location is the cytoplasm. The enzyme catalyses N-terminal L-lysyl-[protein] + L-leucyl-tRNA(Leu) = N-terminal L-leucyl-L-lysyl-[protein] + tRNA(Leu) + H(+). It catalyses the reaction N-terminal L-arginyl-[protein] + L-leucyl-tRNA(Leu) = N-terminal L-leucyl-L-arginyl-[protein] + tRNA(Leu) + H(+). It carries out the reaction L-phenylalanyl-tRNA(Phe) + an N-terminal L-alpha-aminoacyl-[protein] = an N-terminal L-phenylalanyl-L-alpha-aminoacyl-[protein] + tRNA(Phe). Functionally, functions in the N-end rule pathway of protein degradation where it conjugates Leu, Phe and, less efficiently, Met from aminoacyl-tRNAs to the N-termini of proteins containing an N-terminal arginine or lysine. In Psychromonas ingrahamii (strain DSM 17664 / CCUG 51855 / 37), this protein is Leucyl/phenylalanyl-tRNA--protein transferase.